Here is a 432-residue protein sequence, read N- to C-terminus: 3-phosphoshikimate 1-carboxyvinyltransferase (432 aa).

Positions 23, 24, and 28 each coordinate 3-phosphoshikimate. A phosphoenolpyruvate-binding site is contributed by Lys23. Phosphoenolpyruvate-binding residues include Gly95 and Arg123. Residues Ser167, Gln169, Asp317, and Lys344 each contribute to the 3-phosphoshikimate site. A phosphoenolpyruvate-binding site is contributed by Gln169. The active-site Proton acceptor is Asp317. Phosphoenolpyruvate is bound by residues Arg348 and Arg390.

Belongs to the EPSP synthase family. As to quaternary structure, monomer.

The protein localises to the cytoplasm. It carries out the reaction 3-phosphoshikimate + phosphoenolpyruvate = 5-O-(1-carboxyvinyl)-3-phosphoshikimate + phosphate. It functions in the pathway metabolic intermediate biosynthesis; chorismate biosynthesis; chorismate from D-erythrose 4-phosphate and phosphoenolpyruvate: step 6/7. Catalyzes the transfer of the enolpyruvyl moiety of phosphoenolpyruvate (PEP) to the 5-hydroxyl of shikimate-3-phosphate (S3P) to produce enolpyruvyl shikimate-3-phosphate and inorganic phosphate. This chain is 3-phosphoshikimate 1-carboxyvinyltransferase, found in Staphylococcus aureus (strain COL).